We begin with the raw amino-acid sequence, 274 residues long: 2,3,4,5-tetrahydropyridine-2,6-dicarboxylate N-succinyltransferase (274 aa).

Belongs to the transferase hexapeptide repeat family.

The protein localises to the cytoplasm. It catalyses the reaction (S)-2,3,4,5-tetrahydrodipicolinate + succinyl-CoA + H2O = (S)-2-succinylamino-6-oxoheptanedioate + CoA. It functions in the pathway amino-acid biosynthesis; L-lysine biosynthesis via DAP pathway; LL-2,6-diaminopimelate from (S)-tetrahydrodipicolinate (succinylase route): step 1/3. This chain is 2,3,4,5-tetrahydropyridine-2,6-dicarboxylate N-succinyltransferase, found in Escherichia fergusonii (strain ATCC 35469 / DSM 13698 / CCUG 18766 / IAM 14443 / JCM 21226 / LMG 7866 / NBRC 102419 / NCTC 12128 / CDC 0568-73).